Reading from the N-terminus, the 295-residue chain is Sulfotransferase 1A1 (295 aa).

Residue 48–53 (KSGTTW) participates in 3'-phosphoadenylyl sulfate binding. 106–108 (KTH) provides a ligand contact to substrate. The Proton acceptor role is filled by histidine 108. 3'-phosphoadenylyl sulfate-binding positions include arginine 130, serine 138, tyrosine 193, 227 to 232 (TSFKEM), and 255 to 259 (FMRKG). Serine 138 bears the Phosphoserine mark.

The protein belongs to the sulfotransferase 1 family. As to quaternary structure, homodimer. In terms of tissue distribution, distal lung parenchyma.

The protein resides in the cytoplasm. It catalyses the reaction a phenol + 3'-phosphoadenylyl sulfate = an aryl sulfate + adenosine 3',5'-bisphosphate + H(+). It carries out the reaction 17beta-estradiol + 3'-phosphoadenylyl sulfate = 17beta-estradiol 3-sulfate + adenosine 3',5'-bisphosphate + H(+). The catalysed reaction is 4-ethylphenol + 3'-phosphoadenylyl sulfate = 4-ethylphenyl sulfate + adenosine 3',5'-bisphosphate + H(+). The enzyme catalyses 4-nitrophenol + 3'-phosphoadenylyl sulfate = 4-nitrophenyl sulfate + adenosine 3',5'-bisphosphate. It catalyses the reaction dopamine + 3'-phosphoadenylyl sulfate = dopamine 3-O-sulfate + adenosine 3',5'-bisphosphate + H(+). It carries out the reaction dopamine + 3'-phosphoadenylyl sulfate = dopamine 4-O-sulfate + adenosine 3',5'-bisphosphate + H(+). The catalysed reaction is 3,3',5-triiodo-L-thyronine + 3'-phosphoadenylyl sulfate = 3,3',5-triiodo-L-thyronine sulfate + adenosine 3',5'-bisphosphate + H(+). The enzyme catalyses 3,3',5'-triiodo-L-thyronine + 3'-phosphoadenylyl sulfate = 3,3',5'-triiodo-L-thyronine sulfate + adenosine 3',5'-bisphosphate + H(+). It catalyses the reaction 3,3'-diiodo-L-thyronine + 3'-phosphoadenylyl sulfate = 3,3'-diiodo-L-thyronine sulfate + adenosine 3',5'-bisphosphate + H(+). It carries out the reaction L-thyroxine + 3'-phosphoadenylyl sulfate = L-thyroxine sulfate + adenosine 3',5'-bisphosphate + H(+). Sulfotransferase that utilizes 3'-phospho-5'-adenylyl sulfate (PAPS) as sulfonate donor to catalyze the sulfate conjugation of a wide variety of acceptor molecules bearing a hydroxyl or an amine group. Sulfonation increases the water solubility of most compounds, and therefore their renal excretion, but it can also result in bioactivation to form active metabolites. Displays broad substrate specificity for small phenolic compounds. Plays an important role in the sulfonation of endogenous molecules such as steroid hormones. Mediates also the metabolic activation of carcinogenic N-hydroxyarylamines leading to highly reactive intermediates capable of forming DNA adducts, potentially resulting in mutagenesis. May play a role in gut microbiota-host metabolic interaction. O-sulfonates 4-ethylphenol (4-EP), a dietary tyrosine-derived metabolite produced by gut bacteria. The product 4-EPS crosses the blood-brain barrier and may negatively regulate oligodendrocyte maturation and myelination, affecting the functional connectivity of different brain regions associated with the limbic system. Catalyzes the sulfate conjugation of dopamine. Catalyzes the sulfation of T4 (L-thyroxine/3,5,3',5'-tetraiodothyronine), T3 (3,5,3'-triiodothyronine), rT3 (3,3',5'-triiodothyronine) and 3,3'-T2 (3,3'-diiodothyronine), with a substrate preference of 3,3'-T2 &gt; rT3 &gt; T3 &gt; T4. This chain is Sulfotransferase 1A1 (SULT1A1), found in Bos taurus (Bovine).